We begin with the raw amino-acid sequence, 164 residues long: UPF0114 protein Sbal223_3668 (164 aa).

The next 4 membrane-spanning stretches (helical) occupy residues 15-35 (IMAPIYLGLSLVLIGLGIKFF), 53-73 (LVLVTLSLIDITLVGGLIVMV), 108-128 (KVAASIVAISSIHLLKIFMDV), and 136-156 (IMWYLLIHITFVLSAFAMGYL).

Belongs to the UPF0114 family.

It localises to the cell membrane. The chain is UPF0114 protein Sbal223_3668 from Shewanella baltica (strain OS223).